The sequence spans 161 residues: Cytochrome c-type biogenesis protein CcmE (161 aa).

At 1–8 (MNARRKKR) the chain is on the cytoplasmic side. A helical; Signal-anchor for type II membrane protein membrane pass occupies residues 9 to 29 (LTLAVALIGGVAAIASLLLYA). Over 30–161 (LNSNLNLFYT…DYNEQQKTSY (132 aa)) the chain is Periplasmic. H131 and Y135 together coordinate heme.

It belongs to the CcmE/CycJ family.

The protein localises to the cell inner membrane. Functionally, heme chaperone required for the biogenesis of c-type cytochromes. Transiently binds heme delivered by CcmC and transfers the heme to apo-cytochromes in a process facilitated by CcmF and CcmH. The chain is Cytochrome c-type biogenesis protein CcmE from Shewanella sediminis (strain HAW-EB3).